A 430-amino-acid chain; its full sequence is tRNA(Ile)-lysidine synthase (430 aa).

An ATP-binding site is contributed by 27–32; it reads SGGSDS.

It belongs to the tRNA(Ile)-lysidine synthase family.

Its subcellular location is the cytoplasm. The enzyme catalyses cytidine(34) in tRNA(Ile2) + L-lysine + ATP = lysidine(34) in tRNA(Ile2) + AMP + diphosphate + H(+). In terms of biological role, ligates lysine onto the cytidine present at position 34 of the AUA codon-specific tRNA(Ile) that contains the anticodon CAU, in an ATP-dependent manner. Cytidine is converted to lysidine, thus changing the amino acid specificity of the tRNA from methionine to isoleucine. This chain is tRNA(Ile)-lysidine synthase, found in Rickettsia typhi (strain ATCC VR-144 / Wilmington).